The following is a 518-amino-acid chain: Cytochrome P450 3A27 (518 aa).

Cysteine 447 contributes to the heme binding site.

Belongs to the cytochrome P450 family. Heme is required as a cofactor.

It localises to the endoplasmic reticulum membrane. It is found in the microsome membrane. The enzyme catalyses an organic molecule + reduced [NADPH--hemoprotein reductase] + O2 = an alcohol + oxidized [NADPH--hemoprotein reductase] + H2O + H(+). In terms of biological role, cytochromes P450 are a group of heme-thiolate monooxygenases. In liver microsomes, this enzyme is involved in an NADPH-dependent electron transport pathway. It oxidizes a variety of structurally unrelated compounds, including steroids, fatty acids, and xenobiotics. This chain is Cytochrome P450 3A27 (cyp3a27), found in Oncorhynchus mykiss (Rainbow trout).